The following is a 568-amino-acid chain: Fumarate hydratase 2 (568 aa).

Cys133 serves as a coordination point for [4Fe-4S] cluster. (S)-malate contacts are provided by residues 134–135 (QD), Arg173, Gly216, and 219–225 (NKAYLYQ). Residues Cys252 and Cys346 each contribute to the [4Fe-4S] cluster site. (S)-malate is bound by residues Arg421, 467-471 (TTAGR), and Lys491.

This sequence belongs to the class-I fumarase family. Homodimer. The cofactor is [4Fe-4S] cluster.

The protein resides in the cytoplasm. Its subcellular location is the cytosol. The enzyme catalyses (S)-malate = fumarate + H2O. Its activity is regulated as follows. Specifically and competitively inhibited by 2-thiomalate, which coordinates with the catalytic [4Fe-4S] cluster. Weakly inhibited by malonate. Its function is as follows. Cytosolic fumarate hydratase that catalyzes the reversible hydration of fumarate to (S)-malate. The sequence is that of Fumarate hydratase 2 from Leishmania major.